We begin with the raw amino-acid sequence, 255 residues long: Uracil-DNA glycosylase (255 aa).

Catalysis depends on Asp90, which acts as the Proton acceptor.

It belongs to the uracil-DNA glycosylase (UDG) superfamily. UNG family.

The protein localises to the host nucleus. The enzyme catalyses Hydrolyzes single-stranded DNA or mismatched double-stranded DNA and polynucleotides, releasing free uracil.. Excises uracil residues from the DNA which can arise as a result of misincorporation of dUMP residues by DNA polymerase or deamination of cytosines. Therefore may reduce deleterious uracil incorporation into the viral genome, particularly in terminally differentiated cells which lack DNA repair enzymes. The polypeptide is Uracil-DNA glycosylase (Equine herpesvirus 2 (strain 86/87) (EHV-2)).